We begin with the raw amino-acid sequence, 666 residues long: Peptidase S41 family protein phomP1 (666 aa).

The signal sequence occupies residues 1–27; the sequence is MSSFLVQTAVVRLFLLGVVFWFPFALS. Residues Asn-70, Asn-214, and Asn-234 are each glycosylated (N-linked (GlcNAc...) asparagine). The interval 303–504 is peptidase S41 domain; sequence DVAVLQITSF…LLQAQGVRTV (202 aa). N-linked (GlcNAc...) asparagine glycosylation is found at Asn-555 and Asn-612.

This sequence belongs to the peptidase S41A family.

It participates in mycotoxin biosynthesis. In terms of biological role, peptidase S41 family protein; part of the gene cluster that mediates the biosynthesis of the phomopsins, a group of hexapeptide mycotoxins which infects lupins and causes lupinosis disease in livestock. Within the pathway, phomP1 and phomP1' are probably involved in the processing of the phomA and phomA' precursors. The pathway starts with the processing of the precursor phomA by several endopeptidases including kexin proteases as well as the cluster-specific S41 family peptidase phomP1 and the oligopeptidase phomG to produce 10 identical copies of the hexapeptide Tyr-Val-Ile-Pro-Ile-Asp. After being excised from the precursor peptide, the core peptides are cyclized and modified post-translationally by enzymes encoded within the gene cluster. The timing and order of proteolysis of the phomA precursor and PTMs are still unknown. Two tyrosinase-like enzymes, phomQ1 and phomQ2, catalyze the chlorination and hydroxylation of Tyr, respectively. PhomYb, is proposed to be involved in the construction of the macrocyclic structure. The other 4 ustYa family proteins may be involved in PTMs that generate the unique structure of phomopsin A. PhomYa is required for the hydroxylation of C-beta of Tyr. PhomYc, phomYd, and phomYe are responsible for the biosynthesis of 2,3-dehydroisoleucine (dIle), 2,3-dehydroaspartic acid (dAsp), and 3,4-dehydroproline (dPro), respectively. While dIle formation by phomYc is indispensable for the installation of dAsp by phomYd, the order of the other PTMs have not been elucidated yet. Most of the biosynthetic enzymes likely have broad substrate specificity, and thus, there might be a metabolic grid from a precursor to phomopsin A. The enzyme(s) responsible for the biosynthesis of 3,4-dehydrovaline (dVal) have also not been identified yet. Finally, phomM acts as an S-adenosylmethionine-dependent alpha-N-methyltransferase that catalyzes two successive N-methylation reactions, converting N-desmethyl-phomopsin A to phomopsin A and phomopsin A further to an N,N-dimethylated congener called phomopsin E. The sequence is that of Peptidase S41 family protein phomP1 from Diaporthe leptostromiformis (Lupinosis disease fungus).